A 691-amino-acid chain; its full sequence is Calcium-binding and coiled-coil domain-containing protein 1 (691 aa).

Residues 1-30 are p300 KIX-binding; it reads MEESPLSRAPSRGGVNFLNVARTYIPNTKV. An N-terminal AD (CTNNB1 binding site) region spans residues 1–190; the sequence is MEESPLSRAP…VQELERALAT (190 aa). Residue S4 is modified to Phosphoserine. The interaction with GATA1 stretch occupies residues 45 to 125; the sequence is SDWIGIFKVE…FQFREPRPMD (81 aa). Coiled coils occupy residues 145 to 205, 232 to 339, and 417 to 514; these read KATV…YKGI, ELED…AELE, and QSVE…ADEK. The interval 501 to 691 is C-terminal AD (CTNNB1 binding site); interaction with CCAR1; sequence RKLEARLEKV…FSTQDPFTFE (191 aa). The segment at 514–606 is disordered; the sequence is KWNEDATTED…SEAEDEKSVL (93 aa). The segment at 653–679 adopts a UBZ1-type zinc-finger fold; sequence WKECPICKERFPAESDKDALEDHMDGH. C656, C659, H675, and H679 together coordinate Zn(2+).

Belongs to the CALCOCO family. In terms of assembly, part of a calphoglin complex consisting of CALCOCO1, PPA1 and PGM. Interacts with the bHLH-PAS domains of GRIP1, AHR and ARNT. Interacts with CTNNB1 via both its N- and C-terminal regions. Interacts with EP300. Interacts with CCAR1 (via N-terminus) and GATA1.

It localises to the cytoplasm. The protein localises to the nucleus. In terms of biological role, functions as a coactivator for aryl hydrocarbon and nuclear receptors (NR). Recruited to promoters through its contact with the N-terminal basic helix-loop-helix-Per-Arnt-Sim (PAS) domain of transcription factors or coactivators, such as NCOA2. During ER-activation acts synergistically in combination with other NCOA2-binding proteins, such as EP300, CREBBP and CARM1. Involved in the transcriptional activation of target genes in the Wnt/CTNNB1 pathway. Functions as a secondary coactivator in LEF1-mediated transcriptional activation via its interaction with CTNNB1. Coactivator function for nuclear receptors and LEF1/CTNNB1 involves differential utilization of two different activation regions. In association with CCAR1 enhances GATA1- and MED1-mediated transcriptional activation from the gamma-globin promoter during erythroid differentiation of K562 erythroleukemia cells. Functionally, seems to enhance inorganic pyrophosphatase thus activating phosphogluomutase (PMG). Probably functions as a component of the calphoglin complex, which is involved in linking cellular metabolism (phosphate and glucose metabolism) with other core functions including protein synthesis and degradation, calcium signaling and cell growth. In Homo sapiens (Human), this protein is Calcium-binding and coiled-coil domain-containing protein 1 (CALCOCO1).